Reading from the N-terminus, the 1994-residue chain is Protein-methionine sulfoxide oxidase mical3a (1994 aa).

A monooxygenase domain region spans residues 2 to 498 (GDGGVNAVGE…RHLLDTGETR (497 aa)). Residues cysteine 101, 101 to 129 (CGLR…SRNN), glutamate 120, arginine 122, arginine 127, asparagine 129, and aspartate 402 contribute to the FAD site. One can recognise a Calponin-homology (CH) domain in the interval 521 to 627 (IVRSSKLLNW…YLSQFYEMFK (107 aa)). Residues 666 to 708 (ISRKRNPKDKKEKELDGLGKRRKTSQAGQSEDEELQRANRDDR) are disordered. Residues 674 to 684 (DKKEKELDGLG) show a composition bias toward basic and acidic residues. Residues 772–834 (DVCFFCRKRV…KPHYCYRLSG (63 aa)) enclose the LIM zinc-binding domain. Disordered stretches follow at residues 843–900 (PAAA…LKGT), 917–1064 (EELE…AEAR), 1176–1263 (SQPV…ELKK), 1281–1476 (LGLT…REEV), 1493–1555 (VEDT…SPEA), and 1598–1747 (KVAW…LRLR). Acidic residues-rich tracts occupy residues 917 to 926 (EELEEVPEET) and 951 to 961 (SDMEEEDEDAE). A compositionally biased stretch (basic and acidic residues) spans 975 to 987 (EAVELHAKLKGES). Composition is skewed to acidic residues over residues 1001 to 1037 (GEMD…DPEA) and 1046 to 1060 (PGTE…SDAE). Polar residues predominate over residues 1200 to 1215 (PTGNPLSPICTQSQPC). Composition is skewed to basic and acidic residues over residues 1249 to 1263 (RTNE…ELKK) and 1287 to 1297 (ERSKTAVEKSI). Low complexity-rich tracts occupy residues 1299–1314 (KTPT…YTPE) and 1358–1368 (SSSSGLGLNGS). The span at 1369-1389 (VTTSQTAASDSYNNSDSTMLT) shows a compositional bias: polar residues. Positions 1437–1458 (PVSPPQPKQKPVTAPVPTPRTN) are enriched in pro residues. Residues 1464–1476 (RVKEPNKPRREEV) are compositionally biased toward basic and acidic residues. Positions 1616–1635 (AQKDSAVKALESKKQADTLP) are enriched in basic and acidic residues. A compositionally biased stretch (low complexity) spans 1649–1660 (SSVTSSESSTGG). Residues 1661–1679 (KSKKRSSLFSPRKNKKEKK) are compositionally biased toward basic residues. Residues 1680 to 1693 (AKNERLSSTEETPP) are compositionally biased toward basic and acidic residues. The segment covering 1718 to 1729 (CPSTPSSSTTGD) has biased composition (low complexity). Residues 1730-1746 (SGKKKDSPLDRSSDLRL) show a composition bias toward basic and acidic residues. 2 coiled-coil regions span residues 1796-1855 (EEEL…KALR) and 1894-1960 (QEKN…EQRD). In terms of domain architecture, bMERB spans 1816 to 1982 (KQEELKRLHR…EKEEDKDLEA (167 aa)).

The protein belongs to the Mical family. Requires FAD as cofactor.

It is found in the cytoplasm. Its subcellular location is the cytoskeleton. The protein resides in the nucleus. It carries out the reaction L-methionyl-[F-actin] + NADPH + O2 + H(+) = L-methionyl-(R)-S-oxide-[F-actin] + NADP(+) + H2O. In terms of biological role, monooxygenase that promotes depolymerization of F-actin by mediating oxidation of specific methionine residues on actin. Acts by modifying actin subunits through the addition of oxygen to form methionine-sulfoxide, leading to promote actin filament severing and prevent repolymerization. Involved in exocytic vesicles tethering and fusion: the monooxygenase activity is required for this process. In Danio rerio (Zebrafish), this protein is Protein-methionine sulfoxide oxidase mical3a (mical3a).